A 464-amino-acid chain; its full sequence is Protein FAM90A15 (464 aa).

3 disordered regions span residues M1–L42, P70–A389, and H415–P437. 2 stretches are compositionally biased toward basic and acidic residues: residues G74–V89 and N97–R114. Positions L180–L197 are enriched in low complexity.

Belongs to the FAM90 family.

The chain is Protein FAM90A15 from Homo sapiens (Human).